Reading from the N-terminus, the 431-residue chain is O-phosphoseryl-tRNA(Sec) selenium transferase (431 aa).

Residues 1-36 are tetramerization; sequence MRGLIPDHMLERGRTVLDSYREPVERLLSERRMPEE. Arginine 67 is a pyridoxal 5'-phosphate binding site. Positions 88 to 98 are phosphate loop (P-loop); it reads GRSGTLVDPQP. Positions 89, 90, and 97 each coordinate substrate. The residue at position 269 (lysine 269) is an N6-(pyridoxal phosphate)lysine. Arginine 298 contributes to the substrate binding site.

This sequence belongs to the SepSecS family. Homotetramer. The cofactor is pyridoxal 5'-phosphate.

The enzyme catalyses O-phospho-L-seryl-tRNA(Sec) + selenophosphate + H2O = L-selenocysteinyl-tRNA(Sec) + 2 phosphate. Its pathway is aminoacyl-tRNA biosynthesis; selenocysteinyl-tRNA(Sec) biosynthesis; selenocysteinyl-tRNA(Sec) from L-seryl-tRNA(Sec) (archaeal/eukaryal route): step 2/2. Converts O-phosphoseryl-tRNA(Sec) to selenocysteinyl-tRNA(Sec) required for selenoprotein biosynthesis. The protein is O-phosphoseryl-tRNA(Sec) selenium transferase (spcS) of Methanopyrus kandleri (strain AV19 / DSM 6324 / JCM 9639 / NBRC 100938).